The sequence spans 258 residues: Acyl-[acyl-carrier-protein]--UDP-N-acetylglucosamine O-acyltransferase (258 aa).

This sequence belongs to the transferase hexapeptide repeat family. LpxA subfamily. As to quaternary structure, homotrimer.

The protein resides in the cytoplasm. The catalysed reaction is a (3R)-hydroxyacyl-[ACP] + UDP-N-acetyl-alpha-D-glucosamine = a UDP-3-O-[(3R)-3-hydroxyacyl]-N-acetyl-alpha-D-glucosamine + holo-[ACP]. Its pathway is glycolipid biosynthesis; lipid IV(A) biosynthesis; lipid IV(A) from (3R)-3-hydroxytetradecanoyl-[acyl-carrier-protein] and UDP-N-acetyl-alpha-D-glucosamine: step 1/6. Involved in the biosynthesis of lipid A, a phosphorylated glycolipid that anchors the lipopolysaccharide to the outer membrane of the cell. This Neisseria gonorrhoeae (strain ATCC 700825 / FA 1090) protein is Acyl-[acyl-carrier-protein]--UDP-N-acetylglucosamine O-acyltransferase.